The chain runs to 499 residues: Centrosomal protein of 57 kDa (499 aa).

The span at 1–35 (MAAASVSETSASQFSNILAEPSKSNGSMVRHSSSP) shows a compositional bias: polar residues. Positions 1 to 58 (MAAASVSETSASQFSNILAEPSKSNGSMVRHSSSPYVVYPPDKPFLNSDLRRSPNKPT) are disordered. Ser-53 carries the phosphoserine modification. Positions 58–239 (TFAYPESNSR…KAAQLQTGLE (182 aa)) are centrosome localization domain (CLD). Residues 63-241 (ESNSRAIFSA…AQLQTGLEVN (179 aa)) are a coiled coil. The interval 277–490 (AVQPHYRLCL…KDMQSIQNSL (214 aa)) is mediates interaction with microtubules. Disordered stretches follow at residues 334–357 (KQVS…SVNE) and 431–476 (KQKK…SRKN). The segment covering 346–357 (SATPPSSSSVNE) has biased composition (low complexity). Residues 389 to 450 (TVELKDNLEC…KTLDEEGNSS (62 aa)) are a coiled coil. The segment covering 431-444 (KQKKELKATRKTLD) has biased composition (basic and acidic residues). The segment covering 449 to 459 (SSSRSTTTGTT) has biased composition (low complexity). Positions 460-474 (NKKDFAKPRPGEKSR) are enriched in basic and acidic residues.

Belongs to the translokin family. As to quaternary structure, homodimer and homooligomer. Interacts with FGF2 and RAP80. Does not interact with FGF1 or FGF2 isoform 24 kDa. Interacts with microtubules.

The protein resides in the nucleus. It is found in the cytoplasm. The protein localises to the cytoskeleton. It localises to the microtubule organizing center. Its subcellular location is the centrosome. Functionally, centrosomal protein which may be required for microtubule attachment to centrosomes. May act by forming ring-like structures around microtubules. Mediates nuclear translocation and mitogenic activity of the internalized growth factor FGF2. The polypeptide is Centrosomal protein of 57 kDa (CEP57) (Bos taurus (Bovine)).